The sequence spans 255 residues: 3-dehydroquinate dehydratase (255 aa).

3-dehydroquinate-binding positions include 47–49 (EWR) and R83. H145 acts as the Proton donor/acceptor in catalysis. Residue K172 is the Schiff-base intermediate with substrate of the active site. Positions 215, 234, and 238 each coordinate 3-dehydroquinate.

It belongs to the type-I 3-dehydroquinase family. Homodimer.

It carries out the reaction 3-dehydroquinate = 3-dehydroshikimate + H2O. It functions in the pathway metabolic intermediate biosynthesis; chorismate biosynthesis; chorismate from D-erythrose 4-phosphate and phosphoenolpyruvate: step 3/7. Involved in the third step of the chorismate pathway, which leads to the biosynthesis of aromatic amino acids. Catalyzes the cis-dehydration of 3-dehydroquinate (DHQ) and introduces the first double bond of the aromatic ring to yield 3-dehydroshikimate. The sequence is that of 3-dehydroquinate dehydratase from Clostridium kluyveri (strain NBRC 12016).